The chain runs to 595 residues: Arginine--tRNA ligase (595 aa).

The 'HIGH' region signature appears at A132–H142.

Belongs to the class-I aminoacyl-tRNA synthetase family. Monomer.

The protein localises to the cytoplasm. The enzyme catalyses tRNA(Arg) + L-arginine + ATP = L-arginyl-tRNA(Arg) + AMP + diphosphate. The chain is Arginine--tRNA ligase from Cupriavidus necator (strain ATCC 17699 / DSM 428 / KCTC 22496 / NCIMB 10442 / H16 / Stanier 337) (Ralstonia eutropha).